We begin with the raw amino-acid sequence, 401 residues long: 8-amino-7-oxononanoate synthase (401 aa).

Substrate is bound at residue Arg-24. 111-112 (GF) is a pyridoxal 5'-phosphate binding site. Residue His-137 participates in substrate binding. Positions 183, 211, and 240 each coordinate pyridoxal 5'-phosphate. Lys-243 carries the post-translational modification N6-(pyridoxal phosphate)lysine. Thr-357 is a substrate binding site.

It belongs to the class-II pyridoxal-phosphate-dependent aminotransferase family. BioF subfamily. As to quaternary structure, homodimer. The cofactor is pyridoxal 5'-phosphate.

The catalysed reaction is 6-carboxyhexanoyl-[ACP] + L-alanine + H(+) = (8S)-8-amino-7-oxononanoate + holo-[ACP] + CO2. Its pathway is cofactor biosynthesis; biotin biosynthesis. Functionally, catalyzes the decarboxylative condensation of pimeloyl-[acyl-carrier protein] and L-alanine to produce 8-amino-7-oxononanoate (AON), [acyl-carrier protein], and carbon dioxide. This is 8-amino-7-oxononanoate synthase from Xylella fastidiosa (strain M12).